The chain runs to 342 residues: (Lyso)-N-acylphosphatidylethanolamine lipase (342 aa).

The 132-residue stretch at 70–201 (PLVMVHGFGG…KAVASVLGRS (132 aa)) folds into the AB hydrolase-1 domain.

Belongs to the peptidase S33 family. ABHD4/ABHD5 subfamily.

The enzyme catalyses N-hexadecanoyl-1,2-di-(9Z-octadecenoyl)-sn-glycero-3-phosphoethanolamine + H2O = N-hexadecanoyl-1-(9Z-octadecenoyl)-sn-glycero-3-phosphoethanolamine + (9Z)-octadecenoate + H(+). It carries out the reaction an N-acyl-1,2-diacyl-sn-glycero-3-phosphoethanolamine + H2O = N,1-diacyl-sn-glycero-3-phosphoethanolamine + a fatty acid + H(+). The catalysed reaction is N-hexadecanoyl-1-(9Z-octadecenoyl)-sn-glycero-3-phosphoethanolamine + H2O = N-hexadecanoyl-sn-glycero-3-phosphoethanolamine + (9Z)-octadecenoate + H(+). It catalyses the reaction N-octadecanoyl-1-(9Z-octadecenoyl)-sn-glycero-3-phosphoethanolamine + H2O = N-octadecanoyl-sn-glycero-3-phospho-ethanolamine + (9Z)-octadecenoate + H(+). The enzyme catalyses N-eicosanoyl-1-(9Z-octadecenoyl)-sn-glycero-3-phosphoethanolamine + H2O = N-eicosanoyl-sn-glycero-3-phosphoethanolamine + (9Z)-octadecenoate + H(+). It carries out the reaction N,1-di-(9Z-octadecenoyl)-sn-glycero-3-phosphoethanolamine + H2O = N-(9Z-octadecenoyl)-sn-glycero-3-phosphoethanolamine + (9Z)-octadecenoate + H(+). The catalysed reaction is N-(5Z,8Z,11Z,14Z-eicosatetraenoyl)-1-(9Z-octadecenoyl)-sn-glycero-3-phosphoethanolamine + H2O = N-(5Z,8Z,11Z,14Z-eicosatetraenoyl)-sn-glycero-3-phosphoethanolamine + (9Z)-octadecenoate + H(+). It catalyses the reaction 1-octadecanoyl-2-(9Z-octadecenoyl)-sn-glycero-3-phospho-(N-hexadecanoyl)-serine + H2O = 1-octadecanoyl-2-hydroxy-sn-glycero-3-phospho-(N-hexadecanoyl)-serine + (9Z)-octadecenoate + H(+). The enzyme catalyses 1-O-(1Z-octadecenoyl)-2-(9Z-octadecenoyl)-sn-glycero-3-phospho-N-hexadecanoyl-ethanolamine + H2O = 1-O-(1Z-octadecenyl)-sn-glycero-3-phospho-N-hexadecanoyl-ethanolamine + (9Z)-octadecenoate + H(+). It carries out the reaction N,1-diacyl-sn-glycero-3-phosphoethanolamine + H2O = N-acyl-sn-glycero-3-phosphoethanolamine + a fatty acid + H(+). In terms of biological role, lysophospholipase selective for N-acyl phosphatidylethanolamine (NAPE). Contributes to the biosynthesis of N-acyl ethanolamines, including the endocannabinoid anandamide by hydrolyzing the sn-1 and sn-2 acyl chains from N-acyl phosphatidylethanolamine (NAPE) generating glycerophospho-N-acyl ethanolamine (GP-NAE), an intermediate for N-acyl ethanolamine biosynthesis. Hydrolyzes substrates bearing saturated, monounsaturated, polyunsaturated N-acyl chains. Shows no significant activity towards other lysophospholipids, including lysophosphatidylcholine, lysophosphatidylethanolamine and lysophosphatidylserine. This is (Lyso)-N-acylphosphatidylethanolamine lipase from Homo sapiens (Human).